Consider the following 112-residue polypeptide: uncharacterized protein (112 aa).

To Buchnera BUsg564.

This is an uncharacterized protein from Buchnera aphidicola subsp. Acyrthosiphon pisum (strain APS) (Acyrthosiphon pisum symbiotic bacterium).